Consider the following 3914-residue polypeptide: Trichosetin synthetase PKS-NRPS1 (3914 aa).

One can recognise a Ketosynthase family 3 (KS3) domain in the interval 4–420 (NEPIAIIGSA…GTNAHAIIEA (417 aa)). Active-site for beta-ketoacyl synthase activity residues include C177, H301, and H340. A malonyl-CoA:ACP transacylase (MAT) domain region spans residues 525 to 847 (VLTGQGAQWP…REKDDIQQFA (323 aa)). The interval 913 to 1047 (HPILGRRCHD…AHVKASLSVP (135 aa)) is N-terminal hotdog fold. A dehydratase (DH) domain region spans residues 913 to 1214 (HPILGRRCHD…MELVPFSPAT (302 aa)). In terms of domain architecture, PKS/mFAS DH spans 913 to 1216 (HPILGRRCHD…LVPFSPATPE (304 aa)). H946 functions as the Proton acceptor; for dehydratase activity in the catalytic mechanism. A C-terminal hotdog fold region spans residues 1062 to 1216 (LRKVEVDRFY…LVPFSPATPE (155 aa)). Catalysis depends on D1122, which acts as the Proton donor; for dehydratase activity. A methyltransferase (MT) domain region spans residues 1364 to 1593 (EGFGLDLVNK…DLPETKSTEL (230 aa)). The segment at 2083–2255 (TFLLIGLSGE…VAASSIDISS (173 aa)) is ketoreductase (KR) domain. A Carrier 1 domain is found at 2356 to 2436 (LADVKTKADA…DLIEESLNLI (81 aa)). Residue S2396 is modified to O-(pantetheine 4'-phosphoryl)serine. The disordered stretch occupies residues 2447–2518 (EAGSTPTTQP…DSTDNSTPLK (72 aa)). The segment covering 2481–2500 (QQTGSDSSRSPIDTPLTSME) has biased composition (polar residues). The segment at 2529–2956 (SYGQAGFWFL…VQGTNKAADT (428 aa)) is condensation (C) domain. Residues 2991-3388 (QTIQANSTKV…LLFCDGRLED (398 aa)) form an adenylation (A) (KR) domain region. Positions 3502 to 3579 (GTLTVAEQRL…TMAVVLESCG (78 aa)) constitute a Carrier 2 domain. S3539 is subject to O-(pantetheine 4'-phosphoryl)serine. The interval 3615–3831 (LTGSAGYLGR…VLPTGDIVKA (217 aa)) is reductase (RED) domain.

It in the C-terminal section; belongs to the NRP synthetase family.

It carries out the reaction L-serine + 7 malonyl-CoA + acetyl-CoA + 2 S-adenosyl-L-methionine + ATP + 8 NADPH + 11 H(+) = (5S)-3-[(2E,6R,8E,10E,12E)-2,6-dimethyltetradeca-2,8,10,12-tetraenoyl]-5-(hydroxymethyl)pyrrolidine-2,4-dione + AMP + 2 S-adenosyl-L-homocysteine + 7 CO2 + diphosphate + 8 NADP(+) + 8 CoA + 6 H2O. It participates in mycotoxin biosynthesis. Its function is as follows. Hybrid PKS-NRPS synthetase; part of the gene cluster that mediates the biosynthesis of trichosetin, a trans-fused decalin-containing tetramic acid with antimicrobial activity. The PKS module of PKS-NRPS1 together with the enoylreductase (ER) catalyze the formation of the polyketide unit which is then conjugated to L-serine by the condensation domain of the PKS-NRPS1 NRPS module. Activity of the Dieckmann cyclase domain (RED) results in release of the Dieckmann product intermediate. Diels-Alderase (DA) is involved in endo-selective Diels-Alder cycloaddition to form the decalin ring, leading to the production of N-desmethylequisetin also called trichosetin. The cluster does not contain the equisetin N-methyltransferase and consequently, trichosetin is isolated as final product. In Gibberella fujikuroi (strain CBS 195.34 / IMI 58289 / NRRL A-6831) (Bakanae and foot rot disease fungus), this protein is Trichosetin synthetase PKS-NRPS1.